The chain runs to 230 residues: 7-cyano-7-deazaguanine synthase (230 aa).

8-18 (FSGGQDSTTCL) lines the ATP pocket. Zn(2+) contacts are provided by Cys-187, Cys-196, Cys-199, and Cys-202.

The protein belongs to the QueC family. The cofactor is Zn(2+).

The catalysed reaction is 7-carboxy-7-deazaguanine + NH4(+) + ATP = 7-cyano-7-deazaguanine + ADP + phosphate + H2O + H(+). Its pathway is purine metabolism; 7-cyano-7-deazaguanine biosynthesis. Its function is as follows. Catalyzes the ATP-dependent conversion of 7-carboxy-7-deazaguanine (CDG) to 7-cyano-7-deazaguanine (preQ(0)). The polypeptide is 7-cyano-7-deazaguanine synthase (Shewanella amazonensis (strain ATCC BAA-1098 / SB2B)).